The primary structure comprises 152 residues: Large ribosomal subunit protein uL15 (152 aa).

The segment at 1 to 66 (MRSNPMTLRL…GFEGGQTPMQ (66 aa)) is disordered. Residues 28–38 (RGIGSGLGKTA) are compositionally biased toward gly residues. Over residues 39-52 (GRGHKGSFARKGGG) the composition is skewed to basic residues.

Belongs to the universal ribosomal protein uL15 family. In terms of assembly, part of the 50S ribosomal subunit.

Its function is as follows. Binds to the 23S rRNA. This Xanthomonas oryzae pv. oryzae (strain KACC10331 / KXO85) protein is Large ribosomal subunit protein uL15.